The primary structure comprises 125 residues: Large ribosomal subunit protein uL22 (125 aa).

This sequence belongs to the universal ribosomal protein uL22 family. In terms of assembly, part of the 50S ribosomal subunit.

This protein binds specifically to 23S rRNA; its binding is stimulated by other ribosomal proteins, e.g. L4, L17, and L20. It is important during the early stages of 50S assembly. It makes multiple contacts with different domains of the 23S rRNA in the assembled 50S subunit and ribosome. Its function is as follows. The globular domain of the protein is located near the polypeptide exit tunnel on the outside of the subunit, while an extended beta-hairpin is found that lines the wall of the exit tunnel in the center of the 70S ribosome. This Novosphingobium aromaticivorans (strain ATCC 700278 / DSM 12444 / CCUG 56034 / CIP 105152 / NBRC 16084 / F199) protein is Large ribosomal subunit protein uL22.